The sequence spans 425 residues: UPF0597 protein VP2173 (425 aa).

It belongs to the UPF0597 family.

The sequence is that of UPF0597 protein VP2173 from Vibrio parahaemolyticus serotype O3:K6 (strain RIMD 2210633).